Reading from the N-terminus, the 679-residue chain is NADPH--cytochrome P450 reductase (679 aa).

The Lumenal portion of the chain corresponds to 1-21 (MADSHGDTGATMPEAAAQEAS). A helical transmembrane segment spans residues 22–42 (VFSMTDVVLFSLIVGLITYWF). The Cytoplasmic segment spans residues 43–679 (LFRKKKEEVP…KGRYSLDVWS (637 aa)). S64 bears the Phosphoserine mark. The Flavodoxin-like domain maps to 81-225 (IVVFYGSQTG…DFITWREQFW (145 aa)). FMN contacts are provided by residues 87–92 (SQTGTA), 139–142 (ATYG), 174–183 (LGNKTYEHFN), and D209. Residues 280-522 (KNPFLATVTT…FVRKSQFRLP (243 aa)) enclose the FAD-binding FR-type domain. Residue R299 coordinates NADP(+). FAD is bound by residues R425, 455–458 (RYYS), 473–475 (CAV), Y479, and 489–492 (GVAT). NADP(+) is bound by residues T536, 597–598 (SR), 603–607 (KVYVQ), and D640. W678 contacts FAD.

Belongs to the NADPH--cytochrome P450 reductase family. It in the N-terminal section; belongs to the flavodoxin family. This sequence in the C-terminal section; belongs to the flavoprotein pyridine nucleotide cytochrome reductase family. It depends on FAD as a cofactor. The cofactor is FMN.

Its subcellular location is the endoplasmic reticulum membrane. It carries out the reaction 2 oxidized [cytochrome P450] + NADPH = 2 reduced [cytochrome P450] + NADP(+) + H(+). In terms of biological role, this enzyme is required for electron transfer from NADP to cytochrome P450 in microsomes. It can also provide electron transfer to heme oxygenase and cytochrome B5. The sequence is that of NADPH--cytochrome P450 reductase from Oryctolagus cuniculus (Rabbit).